A 498-amino-acid polypeptide reads, in one-letter code: MGLLVSRVLRCRDSSLLEPQPEAIAGASYIPGSRKRKRNSLEELATSSNVHGPQNQGMYPHQVLNYIYWKRVKISSNDAYQNLFLDGHDSDIKIRALGRTWCLHKVFLCQSGYFANILKGTWRESHHGVINLIIKNEDIDTRSLHFVFGALYTDADLSITPLEVPQVLAAACLLRVDRVIQQCEGIMKETINRNTVCSYYLAAETYRLKAVKTRCFEWLLCNLMVHPSVALYKEVDLKLMYLLALSSDLLVMQKEIDVYTTLKIWMFLYLNPCWNGTMKQLLQHANNWLSTHMAYVDNISFLESEEGLIFQPVFKKLRFQHIICDLTSTTILEQDRLIPMAWLSPIYKQQWLTLLRTQEYGVIGPQVINEQELEECTMRCGTMIPKDGRYTWKWSVGRLGFPLRVTFTRQCVILRQRCQRCDGSACHNHIRNVIFRITLVCFDSNKRVTFRKTTGYKILTFEYKEEQIVMKLDSDVLTFPMCIFCNFLFVNLGNAENK.

The Nuclear localization signal motif lies at 33-39 (SRKRKRN). One can recognise a BTB domain in the interval 90–160 (SDIKIRALGR…LYTDADLSIT (71 aa)).

In terms of assembly, interacts with CUL3.

It is found in the nucleus matrix. It participates in protein modification; protein ubiquitination. Functionally, possible function in spermatogenesis. Probable substrate-specific adapter of an E3 ubiquitin-protein ligase complex which mediates the ubiquitination and subsequent proteasomal degradation of target proteins. This is Germ cell-less protein-like 2 (Gmcl2) from Mus musculus (Mouse).